We begin with the raw amino-acid sequence, 154 residues long: Protein X (154 aa).

The interval 28–50 is disordered; that stretch reads RPLPGPLGAVPPSSPSAVPADDG. Residues 33–48 are compositionally biased toward low complexity; the sequence is PLGAVPPSSPSAVPAD. A mitochondrial targeting sequence region spans residues 68–117; that stretch reads PCALRFTSARRMETTVNAPWSLPTVLHKRTLGLSGWSMTWIEEYIKDCVF.

This sequence belongs to the orthohepadnavirus protein X family. May form homodimer. May interact with host CEBPA, CFLAR, CREB1, DDB1, E4F1, HBXIP, HSPD1/HSP60, NFKBIA, POLR2E and SMAD4. Interacts with host SMC5-SMC6 complex and induces its degradation. Interacts with host TRPC4AP; leading to prevent ubiquitination of TRPC4AP. Interacts with host PLSCR1; this interaction promotes ubiquitination and degradation of HBx and impairs HBx-mediated cell proliferation. Post-translationally, a fraction may be phosphorylated in insect cells and HepG2 cells, a human hepatoblastoma cell line. Phosphorylated in vitro by host protein kinase C or mitogen-activated protein kinase. N-acetylated in insect cells.

It localises to the host cytoplasm. It is found in the host nucleus. The protein localises to the host mitochondrion. Functionally, multifunctional protein that plays a role in silencing host antiviral defenses and promoting viral transcription. Does not seem to be essential for HBV infection. May be directly involved in development of cirrhosis and liver cancer (hepatocellular carcinoma). Most of cytosolic activities involve modulation of cytosolic calcium. The effect on apoptosis is controversial depending on the cell types in which the studies have been conducted. May induce apoptosis by localizing in mitochondria and causing loss of mitochondrial membrane potential. May also modulate apoptosis by binding host CFLAR, a key regulator of the death-inducing signaling complex (DISC). Promotes viral transcription by using the host E3 ubiquitin ligase DDB1 to target the SMC5-SMC6 complex to proteasomal degradation. This host complex would otherwise bind to viral episomal DNA, and prevents its transcription. Moderately stimulates transcription of many different viral and cellular transcription elements. Promoters and enhancers stimulated by HBx contain DNA binding sites for NF-kappa-B, AP-1, AP-2, c-EBP, ATF/CREB, or the calcium-activated factor NF-AT. This is Protein X from Homo sapiens (Human).